An 83-amino-acid chain; its full sequence is Small ribosomal subunit protein bS18 (83 aa).

This sequence belongs to the bacterial ribosomal protein bS18 family. In terms of assembly, part of the 30S ribosomal subunit. Forms a tight heterodimer with protein bS6.

Its function is as follows. Binds as a heterodimer with protein bS6 to the central domain of the 16S rRNA, where it helps stabilize the platform of the 30S subunit. The polypeptide is Small ribosomal subunit protein bS18 (Desulfosudis oleivorans (strain DSM 6200 / JCM 39069 / Hxd3) (Desulfococcus oleovorans)).